Here is a 433-residue protein sequence, read N- to C-terminus: MTARYERSAALYERAVARIVGGVNSPARSFKSVGGGAPVFMARGQGPYLYDVDGNRYIDYIGAFGAGMFGHGHPELVAAVARAAEGGTIYGTPNPWEVELAERIHQALPSMERIRFVTTGTEAVMSAVRVARAFTGRPKIIKMEGCYHGHSDFALIAAGSGPSQLGTPDSAGVTEGVAQDVITVPYNDLDSLGEALDVWGPQVAAVLVEPIVGNFGVAMPKPGYLEGVKRLAHAHGALLIFDEVITGFRVAYGGAQTLLGIEPDLTTLGKIIGGGLPLAAYGGRAEIMDWVAPLGPAYQAGTLAGNPLCMQVALTGLEILSRPGVYERLDADAAYLADGLVRSARSHGHTVQLGRAGSMFTLFFCDEPVVDYRTAQRSDPAKFAAMFRGLLDRGIALAPSRFEAWMLTVQHTRADLEETLQIADEVFAQMAGQ.

At Lys-270 the chain carries N6-(pyridoxal phosphate)lysine.

The protein belongs to the class-III pyridoxal-phosphate-dependent aminotransferase family. HemL subfamily. In terms of assembly, homodimer. Requires pyridoxal 5'-phosphate as cofactor.

It localises to the cytoplasm. It catalyses the reaction (S)-4-amino-5-oxopentanoate = 5-aminolevulinate. It participates in porphyrin-containing compound metabolism; protoporphyrin-IX biosynthesis; 5-aminolevulinate from L-glutamyl-tRNA(Glu): step 2/2. This Symbiobacterium thermophilum (strain DSM 24528 / JCM 14929 / IAM 14863 / T) protein is Glutamate-1-semialdehyde 2,1-aminomutase.